A 224-amino-acid chain; its full sequence is Cytochrome c biogenesis ATP-binding export protein CcmA (224 aa).

The region spanning 1 to 220 (MQNAEAAPAL…EYAHAEVVGA (220 aa)) is the ABC transporter domain. An ATP-binding site is contributed by 40–47 (GANGSGKT).

This sequence belongs to the ABC transporter superfamily. CcmA exporter (TC 3.A.1.107) family. As to quaternary structure, the complex is composed of two ATP-binding proteins (CcmA) and two transmembrane proteins (CcmB).

The protein localises to the cell inner membrane. The enzyme catalyses heme b(in) + ATP + H2O = heme b(out) + ADP + phosphate + H(+). Functionally, part of the ABC transporter complex CcmAB involved in the biogenesis of c-type cytochromes; once thought to export heme, this seems not to be the case, but its exact role is uncertain. Responsible for energy coupling to the transport system. This is Cytochrome c biogenesis ATP-binding export protein CcmA from Bordetella parapertussis (strain 12822 / ATCC BAA-587 / NCTC 13253).